Consider the following 164-residue polypeptide: Ubiquitin-fold modifier-conjugating enzyme 1 (164 aa).

The Glycyl thioester intermediate role is filled by C116.

It belongs to the ubiquitin-conjugating enzyme family. UFC1 subfamily.

Its function is as follows. E2-like enzyme which forms an intermediate with UFM1 via a thioester linkage. The chain is Ubiquitin-fold modifier-conjugating enzyme 1 from Drosophila ananassae (Fruit fly).